The sequence spans 498 residues: Myocyte-specific enhancer factor 2D homolog (498 aa).

An interaction with hdac9 region spans residues 1-100 (MGRKKIQIQR…KGFNGCDSPE (100 aa)). The region spanning 3 to 57 (RKKIQIQRITDERNRQVTFTKRKFGLMKKAYELSVLCDCEIALIIFNHSNKLFQY) is the MADS-box domain. Positions 58–86 (ASTDMDKVLLKYTEYNEPHESRTNADIIE) form a DNA-binding region, mef2-type. Disordered regions lie at residues 173 to 215 (LTDP…NSNG), 243 to 267 (LGKV…NSRK), and 411 to 498 (SIKR…AWVT). The segment covering 412 to 424 (IKREPASPNRERS) has biased composition (basic and acidic residues). Composition is skewed to polar residues over residues 425-434 (TGTPLSCFSH) and 447-457 (DSLSSNASSFE).

This sequence belongs to the MEF2 family. In terms of assembly, binds DNA as a multimer, probably as a dimer. Interacts with hdac9. In terms of tissue distribution, restricted to the somitic mesoderm of early embryos and to the body muscle (myotomes) of the tadpole. Expressed in all tissues examined in the adult.

The protein resides in the nucleus. Its function is as follows. May regulate muscle-specific transcription in the embryo and may regulate transcription of a variety of cell types in the adult. It binds to the sequence 5'-CTA[TA]4TAR-3'. This Xenopus laevis (African clawed frog) protein is Myocyte-specific enhancer factor 2D homolog (mef2d).